A 436-amino-acid polypeptide reads, in one-letter code: Cold sensitive U2 snRNA suppressor 1 (436 aa).

A compositionally biased stretch (basic residues) spans 1–10 (MARTKSRKRS). The segment at 1–22 (MARTKSRKRSGNNQNKNASVVN) is disordered. The segment covering 12-22 (NNQNKNASVVN) has biased composition (low complexity). Phosphothreonine occurs at positions 104 and 112. Ser114 is modified (phosphoserine). The disordered stretch occupies residues 374–436 (EFENSKEDTQ…SEKQLYTVLK (63 aa)). A compositionally biased stretch (basic and acidic residues) spans 389-408 (GRQDDKIDDEVEHKLDHFQE).

It to mammalian SAP 145. Some, to C.elegans ZK632.11. In terms of assembly, belongs to the CWC complex (or CEF1-associated complex), a spliceosome sub-complex reminiscent of a late-stage spliceosome composed of the U2, U5 and U6 snRNAs and at least BUD13, BUD31, BRR2, CDC40, CEF1, CLF1, CUS1, CWC2, CWC15, CWC21, CWC22, CWC23, CWC24, CWC25, CWC27, ECM2, HSH155, IST3, ISY1, LEA1, MSL1, NTC20, PRP8, PRP9, PRP11, PRP19, PRP21, PRP22, PRP45, PRP46, SLU7, SMB1, SMD1, SMD2, SMD3, SMX2, SMX3, SNT309, SNU114, SPP2, SYF1, SYF2, RSE1 and YJU2. Interacts with RDS3.

The protein resides in the nucleus. Functionally, essential splicing protein required for U2 snRNP binding to pre-mRNA during spliceosome assembly. The polypeptide is Cold sensitive U2 snRNA suppressor 1 (CUS1) (Saccharomyces cerevisiae (strain ATCC 204508 / S288c) (Baker's yeast)).